A 291-amino-acid polypeptide reads, in one-letter code: Elongation factor Ts (291 aa).

The segment at 79–82 (TDFV) is involved in Mg(2+) ion dislocation from EF-Tu.

Belongs to the EF-Ts family.

Its subcellular location is the cytoplasm. Functionally, associates with the EF-Tu.GDP complex and induces the exchange of GDP to GTP. It remains bound to the aminoacyl-tRNA.EF-Tu.GTP complex up to the GTP hydrolysis stage on the ribosome. This is Elongation factor Ts from Anaplasma marginale (strain Florida).